The sequence spans 409 residues: Elongation factor Tu, chloroplastic (409 aa).

The tr-type G domain maps to 10–214 (KPHVNIGTIG…KIDEYIPTPE (205 aa)). Residues 19 to 26 (GHVDHGKT) are G1. 19-26 (GHVDHGKT) is a GTP binding site. Thr26 contacts Mg(2+). Positions 60–64 (GITIN) are G2. The segment at 81–84 (DCPG) is G3. GTP contacts are provided by residues 81–85 (DCPGH) and 136–139 (NKAD). Residues 136–139 (NKAD) form a G4 region. A G5 region spans residues 174 to 176 (SAL).

This sequence belongs to the TRAFAC class translation factor GTPase superfamily. Classic translation factor GTPase family. EF-Tu/EF-1A subfamily.

Its subcellular location is the plastid. It is found in the chloroplast. The catalysed reaction is GTP + H2O = GDP + phosphate + H(+). Functionally, GTP hydrolase that promotes the GTP-dependent binding of aminoacyl-tRNA to the A-site of ribosomes during protein biosynthesis. The sequence is that of Elongation factor Tu, chloroplastic (tufA) from Rhodomonas salina (Cryptomonas salina).